The following is a 308-amino-acid chain: MKYLLSYTPEVREALDRNRPVVALESTIISHGMPYPENLRTAREVEEIVRSQGAVPATIAVIGGRCKVGLTDEELELLATSPEAVKVSLRDLPVVLARKSLGATTVATTATIAAAAGIEVFVTGGIGGVHRKSPGDPAQMWDVSADLTVLGRTDITVVCAGAKSVLDIGATLEVLETLGVTVLGYRTDRFPGFYTRDTGFGVDARVDTPEEAAAVIHARQQTMLPGGVLVVNPVPEEHAMDPDEVERHIADALKAMAAEGVTGKAVTPYLLARLKEVTSGRALQTNIALVKHNALVGAQIAVALKAGK.

Glu-25 (proton donor) is an active-site residue. Substrate is bound by residues Lys-86 and Val-106. Mn(2+) is bound at residue Asp-142. 144–146 (SAD) contributes to the substrate binding site. Lys-163 functions as the Nucleophile in the catalytic mechanism.

The protein belongs to the pseudouridine-5'-phosphate glycosidase family. As to quaternary structure, homotrimer. Requires Mn(2+) as cofactor.

The catalysed reaction is D-ribose 5-phosphate + uracil = psi-UMP + H2O. Functionally, catalyzes the reversible cleavage of pseudouridine 5'-phosphate (PsiMP) to ribose 5-phosphate and uracil. Functions biologically in the cleavage direction, as part of a pseudouridine degradation pathway. In Symbiobacterium thermophilum (strain DSM 24528 / JCM 14929 / IAM 14863 / T), this protein is Pseudouridine-5'-phosphate glycosidase.